The chain runs to 478 residues: Shikimate biosynthesis protein AroDE (478 aa).

The interval 1–208 is 3-dehydroquinate dehydratase; that stretch reads MLCTIIRGPS…LNHHYFYNFT (208 aa). 3-dehydroquinate contacts are provided by residues S21, 29-31, and 55-57; these read EMR and TWK. H110 acts as the Proton donor/acceptor; for 3-dehydroquinate dehydratase activity in catalysis. The active-site Schiff-base intermediate with substrate; for 3-dehydroquinate dehydratase activity is K133. Residues R171 and Q196 each coordinate 3-dehydroquinate. Positions 209–478 are shikimate 5-dehydrogenase; it reads NLSPQSQICA…VLASLFSIAA (270 aa). Position 226 to 228 (226 to 228) interacts with shikimate; sequence SIG. The Proton acceptor; for shikimate dehydrogenase activity role is filled by K277. 2 residues coordinate shikimate: N298 and D313. NADP(+) contacts are provided by residues 337–341, 360–362, and G435; these read GAGGA and NRT. Q442 contributes to the shikimate binding site.

The protein in the N-terminal section; belongs to the type-I 3-dehydroquinase family. In the C-terminal section; belongs to the shikimate dehydrogenase family.

The enzyme catalyses 3-dehydroquinate = 3-dehydroshikimate + H2O. It catalyses the reaction shikimate + NADP(+) = 3-dehydroshikimate + NADPH + H(+). The protein operates within metabolic intermediate biosynthesis; chorismate biosynthesis; chorismate from D-erythrose 4-phosphate and phosphoenolpyruvate: step 3/7. Its pathway is metabolic intermediate biosynthesis; chorismate biosynthesis; chorismate from D-erythrose 4-phosphate and phosphoenolpyruvate: step 4/7. In terms of biological role, bifunctional enzyme that catalyzes two sequential steps of the aromatic amino acids biosynthetic pathway. In the first reaction, the AroD domain catalyzes the cis-dehydration of 3-dehydroquinate (DHQ) and introduces the first double bond of the aromatic ring to yield 3-dehydroshikimate; in the second reaction, the AroE domain catalyzes the reversible NADPH linked reduction of 3-dehydroshikimate (DHSA) to yield shikimate (SA). This Chlamydia muridarum (strain MoPn / Nigg) protein is Shikimate biosynthesis protein AroDE.